The chain runs to 180 residues: Orotate phosphoribosyltransferase (180 aa).

Residues Arg-95, Lys-96, Lys-99, and 121-129 (EDVTTTGGS) contribute to the 5-phospho-alpha-D-ribose 1-diphosphate site. Orotate contacts are provided by Thr-125 and Arg-153.

It belongs to the purine/pyrimidine phosphoribosyltransferase family. PyrE subfamily. In terms of assembly, homodimer. The cofactor is Mg(2+).

The enzyme catalyses orotidine 5'-phosphate + diphosphate = orotate + 5-phospho-alpha-D-ribose 1-diphosphate. It functions in the pathway pyrimidine metabolism; UMP biosynthesis via de novo pathway; UMP from orotate: step 1/2. Catalyzes the transfer of a ribosyl phosphate group from 5-phosphoribose 1-diphosphate to orotate, leading to the formation of orotidine monophosphate (OMP). The polypeptide is Orotate phosphoribosyltransferase (Methanothermobacter thermautotrophicus (strain ATCC 29096 / DSM 1053 / JCM 10044 / NBRC 100330 / Delta H) (Methanobacterium thermoautotrophicum)).